The following is a 424-amino-acid chain: MSVEKAPELRVLSFNCWGLRFVSKYRTERLKAVGEKLAKCDYDIVLLQEVWSIYDFQEIRNLVSCNLVYSRFFHSAAMGAGLAMFSKFPIIESSMNKYPLNGRPQAFWRGDWYVGKGVATASLQHPSGRIISLFNTHLHAPYGKGADTYLCHRLSQAWYISKLLRAAVQRGHIVIAAGDFNIQPLSVPHEIITSYGLVNDAWLSVYPDQVEHPPNRFSMNDKELVEIAGTTCDSRLNTWRENISSKDMDDFVAKRLDYVFHSPSTCEAKNAKVVFLERVPKLDCSYSDHFAIETVLSIKLQPIPVQETRVSYSIIDDTLGITYQYMARERLHMRLRIAHLLISIPLIIGVHVAIAWCDPAWLKVIILFFTVMLTIAAVVNGFCIGLLFGRWEFNGLLEFVAELKEQKLLCKQYLVDHPLPFAKS.

E49 is a Mg(2+) binding site. H289 acts as the Proton acceptor in catalysis. A run of 2 helical transmembrane segments spans residues 335-357 and 364-386; these read LRIA…IAWC and VIIL…CIGL.

Belongs to the neutral sphingomyelinase family. The cofactor is Mg(2+).

Its subcellular location is the cell membrane. It localises to the endoplasmic reticulum membrane. The protein operates within lipid metabolism; sphingolipid metabolism. Inositol phosphosphingolipids phospholipase essential for the coordination of cell wall formation. Responsible for the hydrolysis of the phosphosphingolipids (IPS), inositol phosphorylceramide (IPC), mannosylinositol phosphorylceramide (MIPC), and mannosyldiinositol phosphorylceramide (M(IP)2C). This is Inositol phosphosphingolipids phospholipase C (css1) from Schizosaccharomyces pombe (strain 972 / ATCC 24843) (Fission yeast).